Reading from the N-terminus, the 185-residue chain is Ribosome-recycling factor (185 aa).

This sequence belongs to the RRF family.

The protein localises to the cytoplasm. Its function is as follows. Responsible for the release of ribosomes from messenger RNA at the termination of protein biosynthesis. May increase the efficiency of translation by recycling ribosomes from one round of translation to another. This chain is Ribosome-recycling factor, found in Pseudomonas fluorescens (strain ATCC BAA-477 / NRRL B-23932 / Pf-5).